Reading from the N-terminus, the 469-residue chain is Adenosylhomocysteinase (469 aa).

Substrate contacts are provided by threonine 58, aspartate 133, and glutamate 195. NAD(+) is bound at residue 196 to 198 (TTT). The substrate site is built by lysine 225 and aspartate 229. NAD(+) contacts are provided by residues asparagine 230, 259–264 (GFGDVG), glutamate 282, asparagine 317, 338–340 (IGH), and asparagine 383.

This sequence belongs to the adenosylhomocysteinase family. It depends on NAD(+) as a cofactor.

It is found in the cytoplasm. The catalysed reaction is S-adenosyl-L-homocysteine + H2O = L-homocysteine + adenosine. Its pathway is amino-acid biosynthesis; L-homocysteine biosynthesis; L-homocysteine from S-adenosyl-L-homocysteine: step 1/1. In terms of biological role, may play a key role in the regulation of the intracellular concentration of adenosylhomocysteine. This Rhodopseudomonas palustris (strain TIE-1) protein is Adenosylhomocysteinase.